Consider the following 435-residue polypeptide: T-cell defective protein 2 (435 aa).

The interval 65 to 146 (NASTSFQSQP…KTPDSLRKSI (82 aa)) is disordered. The stretch at 322–352 (TKISAKKEKEQKKSAAKEAALKEAKEKEMRI) forms a coiled coil. Residues 393 to 419 (FFKANPPPAPRAPQAPELASGPRRIPT) are disordered.

In terms of tissue distribution, strongly expressed in the cytoplasm of the pharynx muscle cells and several head neurons, probably the IL1s or IL2s, throughout development. Also expressed in some other unidentified neurons in the tail region. Weakly expressed in the nuclei of the T-cells and the T-cell daughters. Not expressed in gonads and in P12 cell.

Its subcellular location is the nucleus. The protein localises to the cytoplasm. In terms of biological role, may act synergistically with the Wnt pathways to control T-cell fate specification, gonad development, and P12 cell fate specification. Required for the distribution of pop-1 and tlp-1 proteins. This is T-cell defective protein 2 (tcl-2) from Caenorhabditis elegans.